A 195-amino-acid polypeptide reads, in one-letter code: Peptidyl-tRNA hydrolase (195 aa).

Tyr17 serves as a coordination point for tRNA. Residue His22 is the Proton acceptor of the active site. Residues Phe68, Asn70, and Asn116 each coordinate tRNA.

It belongs to the PTH family. Monomer.

Its subcellular location is the cytoplasm. It catalyses the reaction an N-acyl-L-alpha-aminoacyl-tRNA + H2O = an N-acyl-L-amino acid + a tRNA + H(+). In terms of biological role, hydrolyzes ribosome-free peptidyl-tRNAs (with 1 or more amino acids incorporated), which drop off the ribosome during protein synthesis, or as a result of ribosome stalling. Catalyzes the release of premature peptidyl moieties from peptidyl-tRNA molecules trapped in stalled 50S ribosomal subunits, and thus maintains levels of free tRNAs and 50S ribosomes. The sequence is that of Peptidyl-tRNA hydrolase from Pectobacterium atrosepticum (strain SCRI 1043 / ATCC BAA-672) (Erwinia carotovora subsp. atroseptica).